We begin with the raw amino-acid sequence, 354 residues long: Transcription factor BHLH3 (354 aa).

The tract at residues V124–S143 is disordered. Residues G178–R191 are basic motif. In terms of domain architecture, bHLH spans G178–L227. The interval K192–L227 is helix-loop-helix motif.

It belongs to the bHLH protein family. As to quaternary structure, interacts with LAX1. Phosphorylated by MAPK3 and MAPK6.

Its subcellular location is the nucleus. The protein localises to the cytoplasm. Functionally, transcription factor involved in defense responses that functions downstream of RAC1 and upstream of PAL1 and WRKY19 genes. This chain is Transcription factor BHLH3, found in Oryza sativa subsp. japonica (Rice).